We begin with the raw amino-acid sequence, 336 residues long: tRNA-modifying protein YgfZ (336 aa).

Positions 28 and 191 each coordinate folate.

It belongs to the tRNA-modifying YgfZ family.

It is found in the cytoplasm. In terms of biological role, folate-binding protein involved in regulating the level of ATP-DnaA and in the modification of some tRNAs. It is probably a key factor in regulatory networks that act via tRNA modification, such as initiation of chromosomal replication. In Hamiltonella defensa subsp. Acyrthosiphon pisum (strain 5AT), this protein is tRNA-modifying protein YgfZ.